Reading from the N-terminus, the 683-residue chain is DNA ligase (683 aa).

Residues 36–40, 85–86, and Glu121 contribute to the NAD(+) site; these read DAVYD and SL. Residue Lys123 is the N6-AMP-lysine intermediate of the active site. Positions 144, 180, 296, and 320 each coordinate NAD(+). Zn(2+) is bound by residues Cys413, Cys416, Cys431, and Cys437. In terms of domain architecture, BRCT spans 605-683; that stretch reads PSEGHLSGKV…ESGWRVLAGL (79 aa).

Belongs to the NAD-dependent DNA ligase family. LigA subfamily. It depends on Mg(2+) as a cofactor. Requires Mn(2+) as cofactor.

It catalyses the reaction NAD(+) + (deoxyribonucleotide)n-3'-hydroxyl + 5'-phospho-(deoxyribonucleotide)m = (deoxyribonucleotide)n+m + AMP + beta-nicotinamide D-nucleotide.. Functionally, DNA ligase that catalyzes the formation of phosphodiester linkages between 5'-phosphoryl and 3'-hydroxyl groups in double-stranded DNA using NAD as a coenzyme and as the energy source for the reaction. It is essential for DNA replication and repair of damaged DNA. The chain is DNA ligase from Gluconobacter oxydans (strain 621H) (Gluconobacter suboxydans).